The following is a 305-amino-acid chain: Glycine--tRNA ligase alpha subunit (305 aa).

It belongs to the class-II aminoacyl-tRNA synthetase family. Tetramer of two alpha and two beta subunits.

The protein resides in the cytoplasm. It catalyses the reaction tRNA(Gly) + glycine + ATP = glycyl-tRNA(Gly) + AMP + diphosphate. The polypeptide is Glycine--tRNA ligase alpha subunit (Streptococcus mutans serotype c (strain ATCC 700610 / UA159)).